We begin with the raw amino-acid sequence, 196 residues long: Potassium-transporting ATPase KdpC subunit (196 aa).

A helical membrane pass occupies residues 7-27 (PALVLFFVLTLLTGVAYPLAV).

The protein belongs to the KdpC family. As to quaternary structure, the system is composed of three essential subunits: KdpA, KdpB and KdpC.

Its subcellular location is the cell inner membrane. Its function is as follows. Part of the high-affinity ATP-driven potassium transport (or Kdp) system, which catalyzes the hydrolysis of ATP coupled with the electrogenic transport of potassium into the cytoplasm. This subunit acts as a catalytic chaperone that increases the ATP-binding affinity of the ATP-hydrolyzing subunit KdpB by the formation of a transient KdpB/KdpC/ATP ternary complex. The sequence is that of Potassium-transporting ATPase KdpC subunit from Polaromonas naphthalenivorans (strain CJ2).